A 635-amino-acid polypeptide reads, in one-letter code: tRNA uridine 5-carboxymethylaminomethyl modification enzyme MnmG (635 aa).

Residue 19 to 24 participates in FAD binding; the sequence is GAGHAG. 280–294 serves as a coordination point for NAD(+); sequence GPRYCPSIEDKIVRF.

The protein belongs to the MnmG family. Homodimer. Heterotetramer of two MnmE and two MnmG subunits. Requires FAD as cofactor.

The protein localises to the cytoplasm. Its function is as follows. NAD-binding protein involved in the addition of a carboxymethylaminomethyl (cmnm) group at the wobble position (U34) of certain tRNAs, forming tRNA-cmnm(5)s(2)U34. This Synechocystis sp. (strain ATCC 27184 / PCC 6803 / Kazusa) protein is tRNA uridine 5-carboxymethylaminomethyl modification enzyme MnmG.